The chain runs to 360 residues: Carbamoyl phosphate synthase small chain (360 aa).

Residues 1–169 (MTKRLLILED…TKTAYPAPGI (169 aa)) form a CPSase region. L-glutamine-binding residues include Ser46, Gly220, and Gly222. A Glutamine amidotransferase type-1 domain is found at 172-358 (NIVLVDFGLK…LEMIDSWRCT (187 aa)). Cys247 acts as the Nucleophile in catalysis. The L-glutamine site is built by Met248, Gln251, Asn289, Gly291, and Tyr292. Active-site residues include His331 and Asp333.

Belongs to the CarA family. Composed of two chains; the small (or glutamine) chain promotes the hydrolysis of glutamine to ammonia, which is used by the large (or ammonia) chain to synthesize carbamoyl phosphate. Tetramer of heterodimers (alpha,beta)4.

The catalysed reaction is hydrogencarbonate + L-glutamine + 2 ATP + H2O = carbamoyl phosphate + L-glutamate + 2 ADP + phosphate + 2 H(+). The enzyme catalyses L-glutamine + H2O = L-glutamate + NH4(+). It functions in the pathway amino-acid biosynthesis; L-arginine biosynthesis; carbamoyl phosphate from bicarbonate: step 1/1. It participates in pyrimidine metabolism; UMP biosynthesis via de novo pathway; (S)-dihydroorotate from bicarbonate: step 1/3. In terms of biological role, small subunit of the glutamine-dependent carbamoyl phosphate synthetase (CPSase). CPSase catalyzes the formation of carbamoyl phosphate from the ammonia moiety of glutamine, carbonate, and phosphate donated by ATP, constituting the first step of 2 biosynthetic pathways, one leading to arginine and/or urea and the other to pyrimidine nucleotides. The small subunit (glutamine amidotransferase) binds and cleaves glutamine to supply the large subunit with the substrate ammonia. This is Carbamoyl phosphate synthase small chain from Streptococcus pyogenes serotype M3 (strain SSI-1).